Consider the following 188-residue polypeptide: Elongation factor P (188 aa).

Lys34 is modified (N6-(3,6-diaminohexanoyl)-5-hydroxylysine).

This sequence belongs to the elongation factor P family. May be beta-lysylated on the epsilon-amino group of Lys-34 by the combined action of EpmA and EpmB, and then hydroxylated on the C5 position of the same residue by EpmC (if this protein is present). Lysylation is critical for the stimulatory effect of EF-P on peptide-bond formation. The lysylation moiety may extend toward the peptidyltransferase center and stabilize the terminal 3-CCA end of the tRNA. Hydroxylation of the C5 position on Lys-34 may allow additional potential stabilizing hydrogen-bond interactions with the P-tRNA.

The protein resides in the cytoplasm. It participates in protein biosynthesis; polypeptide chain elongation. Its function is as follows. Involved in peptide bond synthesis. Alleviates ribosome stalling that occurs when 3 or more consecutive Pro residues or the sequence PPG is present in a protein, possibly by augmenting the peptidyl transferase activity of the ribosome. Modification of Lys-34 is required for alleviation. The protein is Elongation factor P of Pasteurella multocida (strain Pm70).